Here is a 162-residue protein sequence, read N- to C-terminus: Shikimate kinase (162 aa).

11-16 contributes to the ATP binding site; that stretch reads GSGKSS. Serine 15 provides a ligand contact to Mg(2+). Substrate-binding residues include aspartate 33, arginine 57, and glycine 80. Arginine 116 is an ATP binding site. Arginine 132 contributes to the substrate binding site.

The protein belongs to the shikimate kinase family. In terms of assembly, monomer. Requires Mg(2+) as cofactor.

It is found in the cytoplasm. It catalyses the reaction shikimate + ATP = 3-phosphoshikimate + ADP + H(+). It participates in metabolic intermediate biosynthesis; chorismate biosynthesis; chorismate from D-erythrose 4-phosphate and phosphoenolpyruvate: step 5/7. Its function is as follows. Catalyzes the specific phosphorylation of the 3-hydroxyl group of shikimic acid using ATP as a cosubstrate. This chain is Shikimate kinase, found in Helicobacter pylori (strain HPAG1).